The sequence spans 477 residues: Lactate utilization protein B (477 aa).

4Fe-4S ferredoxin-type domains follow at residues 304-334 (GTEFQSVLQCIRCAACINVCPVYRHVGGHSY) and 353-382 (YDDYKELPYASSLCAACSEACPVKIPLHEL). [4Fe-4S] cluster contacts are provided by C313, C316, C319, C323, C366, C369, and C373. Positions 433 to 477 (KEDGKITKGPGPLKQWTQIRDFPAPNKSRFRDWFEDRRKEKGEDK) are disordered. Positions 461-477 (RFRDWFEDRRKEKGEDK) are enriched in basic and acidic residues.

This sequence belongs to the LutB/YkgF family.

Its function is as follows. Is involved in L-lactate degradation and allows cells to grow with lactate as the sole carbon source. Has probably a role as an electron transporter during oxidation of L-lactate. This is Lactate utilization protein B from Bacillus licheniformis (strain ATCC 14580 / DSM 13 / JCM 2505 / CCUG 7422 / NBRC 12200 / NCIMB 9375 / NCTC 10341 / NRRL NRS-1264 / Gibson 46).